A 1293-amino-acid chain; its full sequence is Phosphoribosylformylglycinamidine synthase (1293 aa).

Residues G305–D316 and A676 contribute to the ATP site. Mg(2+)-binding residues include D677, E716, N720, and D884. S886 is a binding site for ATP. In terms of domain architecture, Glutamine amidotransferase type-1 spans M1040–G1293. C1133 acts as the Nucleophile in catalysis. Catalysis depends on residues H1258 and E1260.

The protein in the N-terminal section; belongs to the FGAMS family. In terms of assembly, monomer.

Its subcellular location is the cytoplasm. It carries out the reaction N(2)-formyl-N(1)-(5-phospho-beta-D-ribosyl)glycinamide + L-glutamine + ATP + H2O = 2-formamido-N(1)-(5-O-phospho-beta-D-ribosyl)acetamidine + L-glutamate + ADP + phosphate + H(+). It participates in purine metabolism; IMP biosynthesis via de novo pathway; 5-amino-1-(5-phospho-D-ribosyl)imidazole from N(2)-formyl-N(1)-(5-phospho-D-ribosyl)glycinamide: step 1/2. Phosphoribosylformylglycinamidine synthase involved in the purines biosynthetic pathway. Catalyzes the ATP-dependent conversion of formylglycinamide ribonucleotide (FGAR) and glutamine to yield formylglycinamidine ribonucleotide (FGAM) and glutamate. This Shewanella denitrificans (strain OS217 / ATCC BAA-1090 / DSM 15013) protein is Phosphoribosylformylglycinamidine synthase.